Consider the following 161-residue polypeptide: PHD finger-containing protein 4 (161 aa).

The segment at 30–80 adopts a PHD-type zinc-finger fold; that stretch reads KKPCEVCGSNANDHAIMTCFLCRDTREHIYCARVHLRSVPRMWICEECRMN. Residues Cys33, Cys36, Cys48, Cys51, His57, Cys60, Cys74, and Cys77 each coordinate Zn(2+). A compositionally biased stretch (polar residues) spans 114-132; it reads TMTSSDSGNQISATHQQPP. Positions 114-161 are disordered; it reads TMTSSDSGNQISATHQQPPQAHASPVAVPMDTSSSDNQQPPSDSESAI. Residues 146–161 are compositionally biased toward low complexity; the sequence is SSSDNQQPPSDSESAI.

As to quaternary structure, interacts directly with AIPP3/BDT1.

In terms of biological role, together with AIPP3/BDT1, cooperates to form a BAH-PHD bivalent histone reader complex able to read histone H3 lysine 27 trimethylation (H3K27me3) histone marks in order to regulate transcription, especially to prevent early flowering; promotes AIPP3/BDT1 binding to H3K27me3. This Arabidopsis thaliana (Mouse-ear cress) protein is PHD finger-containing protein 4.